Here is a 188-residue protein sequence, read N- to C-terminus: Protein-arginine kinase activator protein (188 aa).

Short sequence motifs (CXXC metal binding motif) lie at residues 3 to 6 (CENC), 29 to 32 (CQTC), 87 to 90 (CPSC), and 105 to 108 (CANC). In terms of domain architecture, UVR spans 145-180 (KRKIEEKNEYLKKLIEIQDFEEAAIVRDEIKALKAE).

In terms of assembly, interacts with McsB and CtsR; the CXXC motifs are needed for the binding.

Its function is as follows. Activates the phosphorylation activity of the protein-arginine kinase McsB. May function as an important molecule for oxidative tolerance in various types of stress including that of heavy metals. Binds to Cu(2+), Zn(2+), Co(2+) and Cd(2+) via its CXXC metal binding motifs. The polypeptide is Protein-arginine kinase activator protein (Staphylococcus aureus (strain NCTC 8325 / PS 47)).